The sequence spans 126 residues: Alpha-lactalbumin (126 aa).

One can recognise a C-type lysozyme domain in the interval 1 to 126 (KVFEKCELSQ…CIADLDQWKC (126 aa)). 4 cysteine pairs are disulfide-bonded: Cys-6-Cys-126, Cys-30-Cys-117, Cys-63-Cys-82, and Cys-78-Cys-96. Asn-47 carries an N-linked (GlcNAc...) asparagine glycan. Residues Lys-84, Asp-87, Asp-89, Asp-92, and Asp-93 each contribute to the Ca(2+) site.

The protein belongs to the glycosyl hydrolase 22 family. As to quaternary structure, lactose synthase (LS) is a heterodimer of a catalytic component, beta1,4-galactosyltransferase (beta4Gal-T1) and a regulatory component, alpha-lactalbumin (LA). As to expression, mammary gland specific. Secreted in milk.

It localises to the secreted. Regulatory subunit of lactose synthase, changes the substrate specificity of galactosyltransferase in the mammary gland making glucose a good acceptor substrate for this enzyme. This enables LS to synthesize lactose, the major carbohydrate component of milk. In other tissues, galactosyltransferase transfers galactose onto the N-acetylglucosamine of the oligosaccharide chains in glycoproteins. This chain is Alpha-lactalbumin (LALBA), found in Tachyglossus aculeatus aculeatus (Southeast Australian short-beaked echidna).